We begin with the raw amino-acid sequence, 468 residues long: Ribulose bisphosphate carboxylase large chain (468 aa).

Lysine 7 is subject to N6,N6,N6-trimethyllysine. Substrate-binding residues include asparagine 116 and threonine 166. Lysine 168 functions as the Proton acceptor in the catalytic mechanism. Lysine 170 contacts substrate. Lysine 194, aspartate 196, and glutamate 197 together coordinate Mg(2+). Lysine 194 carries the N6-carboxylysine modification. The active-site Proton acceptor is the histidine 287. Substrate-binding residues include arginine 288, histidine 320, and serine 372.

It belongs to the RuBisCO large chain family. Type I subfamily. Heterohexadecamer of 8 large chains and 8 small chains; disulfide-linked. The disulfide link is formed within the large subunit homodimers. Mg(2+) serves as cofactor. The disulfide bond which can form in the large chain dimeric partners within the hexadecamer appears to be associated with oxidative stress and protein turnover.

It localises to the plastid. The protein resides in the chloroplast. The catalysed reaction is 2 (2R)-3-phosphoglycerate + 2 H(+) = D-ribulose 1,5-bisphosphate + CO2 + H2O. The enzyme catalyses D-ribulose 1,5-bisphosphate + O2 = 2-phosphoglycolate + (2R)-3-phosphoglycerate + 2 H(+). In terms of biological role, ruBisCO catalyzes two reactions: the carboxylation of D-ribulose 1,5-bisphosphate, the primary event in carbon dioxide fixation, as well as the oxidative fragmentation of the pentose substrate in the photorespiration process. Both reactions occur simultaneously and in competition at the same active site. The polypeptide is Ribulose bisphosphate carboxylase large chain (Cornus alternifolia (Pagoda dogwood)).